The sequence spans 62 residues: Photosystem II reaction center protein Z (62 aa).

The next 2 membrane-spanning stretches (helical) occupy residues 8 to 28 (AVFA…VALA) and 41 to 61 (FSGV…NSFI).

It belongs to the PsbZ family. In terms of assembly, PSII is composed of 1 copy each of membrane proteins PsbA, PsbB, PsbC, PsbD, PsbE, PsbF, PsbH, PsbI, PsbJ, PsbK, PsbL, PsbM, PsbT, PsbY, PsbZ, Psb30/Ycf12, at least 3 peripheral proteins of the oxygen-evolving complex and a large number of cofactors. It forms dimeric complexes.

It localises to the plastid. It is found in the chloroplast thylakoid membrane. Its function is as follows. May control the interaction of photosystem II (PSII) cores with the light-harvesting antenna, regulates electron flow through the 2 photosystem reaction centers. PSII is a light-driven water plastoquinone oxidoreductase, using light energy to abstract electrons from H(2)O, generating a proton gradient subsequently used for ATP formation. This chain is Photosystem II reaction center protein Z, found in Pinus thunbergii (Japanese black pine).